Reading from the N-terminus, the 59-residue chain is Cecropin-A2 (59 aa).

The signal sequence occupies residues 1–23 (MNFNKLFAIVLLAALVLLGQTEA).

It belongs to the cecropin family.

The protein resides in the secreted. Functionally, cecropins have lytic and antibacterial activity against several Gram-positive and Gram-negative bacteria. The sequence is that of Cecropin-A2 (CECA2) from Aedes albopictus (Asian tiger mosquito).